Reading from the N-terminus, the 206-residue chain is Dephospho-CoA kinase (206 aa).

The DPCK domain occupies 4–204; the sequence is VIGLTGGIAS…EGYIESHSED (201 aa). 12-17 is an ATP binding site; sequence ASGKST.

Belongs to the CoaE family.

It is found in the cytoplasm. It catalyses the reaction 3'-dephospho-CoA + ATP = ADP + CoA + H(+). Its pathway is cofactor biosynthesis; coenzyme A biosynthesis; CoA from (R)-pantothenate: step 5/5. Its function is as follows. Catalyzes the phosphorylation of the 3'-hydroxyl group of dephosphocoenzyme A to form coenzyme A. The polypeptide is Dephospho-CoA kinase (Staphylococcus saprophyticus subsp. saprophyticus (strain ATCC 15305 / DSM 20229 / NCIMB 8711 / NCTC 7292 / S-41)).